Reading from the N-terminus, the 101-residue chain is NAD(P)H-quinone oxidoreductase subunit 4L, chloroplastic (101 aa).

3 helical membrane-spanning segments follow: residues 2 to 22, 32 to 52, and 61 to 81; these read ILEHVLVLSAYLFLIGLYGLI, MCLELILNAVNMNFVTFSDFF, and IFCIFVIAIAAAEAAIGLAIV.

It belongs to the complex I subunit 4L family. As to quaternary structure, NDH is composed of at least 16 different subunits, 5 of which are encoded in the nucleus.

It localises to the plastid. The protein localises to the chloroplast thylakoid membrane. The enzyme catalyses a plastoquinone + NADH + (n+1) H(+)(in) = a plastoquinol + NAD(+) + n H(+)(out). It carries out the reaction a plastoquinone + NADPH + (n+1) H(+)(in) = a plastoquinol + NADP(+) + n H(+)(out). NDH shuttles electrons from NAD(P)H:plastoquinone, via FMN and iron-sulfur (Fe-S) centers, to quinones in the photosynthetic chain and possibly in a chloroplast respiratory chain. The immediate electron acceptor for the enzyme in this species is believed to be plastoquinone. Couples the redox reaction to proton translocation, and thus conserves the redox energy in a proton gradient. The sequence is that of NAD(P)H-quinone oxidoreductase subunit 4L, chloroplastic from Arabidopsis thaliana (Mouse-ear cress).